Here is a 147-residue protein sequence, read N- to C-terminus: uncharacterized protein (147 aa).

The HTH LytTR-type domain maps to 44–147 (LVGYIDKEIH…LKSIKERLSI (104 aa)).

The protein resides in the cytoplasm. This is an uncharacterized protein from Staphylococcus aureus (strain MW2).